The sequence spans 327 residues: tRNA N6-adenosine threonylcarbamoyltransferase (327 aa).

Residues His109 and His113 each coordinate Fe cation. Residues 132–136 (MVSGG), Asp165, Gly178, Asp182, and Asn268 each bind substrate. Asp296 is a Fe cation binding site.

It belongs to the KAE1 / TsaD family. Requires Fe(2+) as cofactor.

Its subcellular location is the cytoplasm. It carries out the reaction L-threonylcarbamoyladenylate + adenosine(37) in tRNA = N(6)-L-threonylcarbamoyladenosine(37) in tRNA + AMP + H(+). Functionally, required for the formation of a threonylcarbamoyl group on adenosine at position 37 (t(6)A37) in tRNAs that read codons beginning with adenine. Is involved in the transfer of the threonylcarbamoyl moiety of threonylcarbamoyl-AMP (TC-AMP) to the N6 group of A37, together with TsaE and TsaB. TsaD likely plays a direct catalytic role in this reaction. The protein is tRNA N6-adenosine threonylcarbamoyltransferase of Thermotoga petrophila (strain ATCC BAA-488 / DSM 13995 / JCM 10881 / RKU-1).